Reading from the N-terminus, the 458-residue chain is Serine/threonine-protein kinase tricornered (458 aa).

Residues 92–389 (FEALKVIGRG…LEDLKSVPFF (298 aa)) form the Protein kinase domain. ATP is bound by residues 98–106 (IGRGAFGEV) and K121. The interaction with mats and Mob1 stretch occupies residues 118-179 (YAMKVLRKAD…EFLPGGDMMT (62 aa)). The active-site Proton acceptor is D215. S287 is modified (phosphoserine). Residues 390–458 (RGVDWEHIRE…YKRFEVRNLE (69 aa)) enclose the AGC-kinase C-terminal domain. T448 is modified (phosphothreonine).

This sequence belongs to the protein kinase superfamily. AGC Ser/Thr protein kinase family. In terms of assembly, interacts with, and is activated by, Mob1. Mg(2+) serves as cofactor.

Its subcellular location is the cytoplasm. The protein localises to the nucleus. The catalysed reaction is L-seryl-[protein] + ATP = O-phospho-L-seryl-[protein] + ADP + H(+). It carries out the reaction L-threonyl-[protein] + ATP = O-phospho-L-threonyl-[protein] + ADP + H(+). Its function is as follows. Serine/threonine-protein kinase involved in controlling cell structure and proliferation of a variety of polarized outgrowths including epidermal hairs, bristles, arista laterals, and dendrites. Together with fry, maintains the integrity of epidermal hairs and is an essential component of the signaling pathway regulating dendritic branching of sensory neurons. Reduces neurite outgrowth by phosphorylating pav/pavarotti, thereby inhibiting its function in microtubule-microtubule sliding. The chain is Serine/threonine-protein kinase tricornered from Drosophila pseudoobscura pseudoobscura (Fruit fly).